Consider the following 237-residue polypeptide: 7-cyano-7-deazaguanine synthase (237 aa).

15-25 (LSGGMDSTVCA) serves as a coordination point for ATP. 4 residues coordinate Zn(2+): Cys197, Cys205, Cys208, and Cys211.

This sequence belongs to the QueC family. The cofactor is Zn(2+).

The catalysed reaction is 7-carboxy-7-deazaguanine + NH4(+) + ATP = 7-cyano-7-deazaguanine + ADP + phosphate + H2O + H(+). It participates in purine metabolism; 7-cyano-7-deazaguanine biosynthesis. Functionally, catalyzes the ATP-dependent conversion of 7-carboxy-7-deazaguanine (CDG) to 7-cyano-7-deazaguanine (preQ(0)). This is 7-cyano-7-deazaguanine synthase from Koribacter versatilis (strain Ellin345).